Reading from the N-terminus, the 130-residue chain is DNA-binding protein HU (130 aa).

This sequence belongs to the bacterial histone-like protein family.

Functionally, histone-like DNA-binding protein which is capable of wrapping DNA to stabilize it, and thus to prevent its denaturation under extreme environmental conditions. This chain is DNA-binding protein HU (hup), found in Ureaplasma parvum serovar 3 (strain ATCC 700970).